We begin with the raw amino-acid sequence, 280 residues long: Nocamycin O-methyltransferase (280 aa).

Belongs to the methyltransferase superfamily.

It carries out the reaction nocamycin E + S-adenosyl-L-methionine = nocamycin I + S-adenosyl-L-homocysteine. Its pathway is antibiotic biosynthesis. Functionally, involved in the biosynthesis of nocamycin I and nocamycin II. Catalyzes the methylation of nocamycin E to yield nocamycin I. The protein is Nocamycin O-methyltransferase of Saccharothrix syringae (Nocardiopsis syringae).